The chain runs to 200 residues: ATP-dependent Clp protease proteolytic subunit (200 aa).

Residue Ser-101 is the Nucleophile of the active site. His-126 is an active-site residue.

Belongs to the peptidase S14 family. Component of the chloroplastic Clp protease core complex.

It localises to the plastid. The protein localises to the chloroplast stroma. The catalysed reaction is Hydrolysis of proteins to small peptides in the presence of ATP and magnesium. alpha-casein is the usual test substrate. In the absence of ATP, only oligopeptides shorter than five residues are hydrolyzed (such as succinyl-Leu-Tyr-|-NHMec, and Leu-Tyr-Leu-|-Tyr-Trp, in which cleavage of the -Tyr-|-Leu- and -Tyr-|-Trp bonds also occurs).. Its function is as follows. Cleaves peptides in various proteins in a process that requires ATP hydrolysis. Has a chymotrypsin-like activity. Plays a major role in the degradation of misfolded proteins. This Ostreococcus tauri protein is ATP-dependent Clp protease proteolytic subunit.